The chain runs to 65 residues: Small ribosomal subunit protein bS21 (65 aa).

It belongs to the bacterial ribosomal protein bS21 family.

This is Small ribosomal subunit protein bS21 from Geotalea daltonii (strain DSM 22248 / JCM 15807 / FRC-32) (Geobacter daltonii).